A 208-amino-acid polypeptide reads, in one-letter code: V-type proton ATPase subunit E (208 aa).

It belongs to the V-ATPase E subunit family.

Functionally, produces ATP from ADP in the presence of a proton gradient across the membrane. This Chlamydia trachomatis serovar L2 (strain ATCC VR-902B / DSM 19102 / 434/Bu) protein is V-type proton ATPase subunit E.